The following is a 710-amino-acid chain: Polyribonucleotide nucleotidyltransferase (710 aa).

Mg(2+) contacts are provided by Asp489 and Asp495. Residues 556 to 615 form the KH domain; that stretch reads PKIDTIKIDVDKIKVVIGKGGETIDKIIAETGVKIDIDDEGNVSIYSSDQAAIDRTKEII. In terms of domain architecture, S1 motif spans 625–693; sequence GEVYHAKVIR…EKGRVDASMK (69 aa). Residues 691 to 710 are disordered; sequence SMKALIPRPPKPEKKEEKHD. Basic and acidic residues predominate over residues 700–710; that stretch reads PKPEKKEEKHD.

This sequence belongs to the polyribonucleotide nucleotidyltransferase family. Mg(2+) is required as a cofactor.

The protein localises to the cytoplasm. It carries out the reaction RNA(n+1) + phosphate = RNA(n) + a ribonucleoside 5'-diphosphate. Functionally, involved in mRNA degradation. Catalyzes the phosphorolysis of single-stranded polyribonucleotides processively in the 3'- to 5'-direction. The sequence is that of Polyribonucleotide nucleotidyltransferase from Streptococcus pyogenes serotype M18 (strain MGAS8232).